A 269-amino-acid polypeptide reads, in one-letter code: ATP synthase subunit gamma, mitochondrial (269 aa).

As to quaternary structure, F-type ATP synthases have 2 components, the catalytic core F(1) and the membrane-embedded component F(0), linked together by a central stalk and a peripheral stalk. The central stalk, also called rotor shaft, is often seen as part of F(1). The peripheral stalk is seen as part of F(0). F(0) contains the membrane channel next to the rotor. F-type ATP synthases form dimers but each monomer functions independently in ATP generation. The dimer consists of 18 different polypeptides: ATP1 (subunit alpha, part of F(1), 3 molecules per monomer), ATP2 (subunit beta, part of F(1), 3 molecules per monomer), ATP3 (subunit gamma, part of the central stalk), ATP4 (subunit b, part of the peripheral stalk), ATP5/OSCP (subunit 5/OSCP, part of the peripheral stalk), ATP6 (subunit a, part of the peripheral stalk), ATP7 (subunit d, part of the peripheral stalk), ATP8 (subunit 8, part of the peripheral stalk), OLI1 (subunit c, part of the rotor, 10 molecules per monomer), ATP14 (subunit h, part of the peripheral stalk), ATP15 (subunit epsilon, part of the central stalk), ATP16 (subunit delta, part of the central stalk), ATP17 (subunit f, part of the peripheral stalk), ATP18 (subunit i/j, part of the peripheral stalk). Dimer-specific subunits are ATP19 (subunit k, at interface between monomers), ATP20 (subunit g, at interface between monomers), TIM11 (subunit e, at interface between monomers). Also contains subunit L.

The protein resides in the mitochondrion inner membrane. Its function is as follows. Mitochondrial membrane ATP synthase (F(1)F(0) ATP synthase or Complex V) produces ATP from ADP in the presence of a proton gradient across the membrane which is generated by electron transport complexes of the respiratory chain. F-type ATP synthases consist of two structural domains, F(1) - containing the extramembraneous catalytic core, and F(0) - containing the membrane proton channel, linked together by a central stalk and a peripheral stalk. During catalysis, ATP synthesis in the catalytic domain of F(1) is coupled via a rotary mechanism of the central stalk subunits to proton translocation. Part of the complex F(1) domain and the central stalk which is part of the complex rotary element. The gamma/ATP3 subunit protrudes into the catalytic domain formed of alpha/ATP1(3)beta/ATP2(3). Rotation of the central stalk against the surrounding alpha/ATP1(3)beta/ATP2(3) subunits leads to hydrolysis of ATP in three separate catalytic sites on the beta/ATP2 subunits. The polypeptide is ATP synthase subunit gamma, mitochondrial (Pichia angusta (Yeast)).